The following is a 179-amino-acid chain: GTP-dependent dephospho-CoA kinase (179 aa).

Residues D43, V45, D62, E120, and D143 each contribute to the GTP site.

This sequence belongs to the GTP-dependent DPCK family.

The catalysed reaction is 3'-dephospho-CoA + GTP = GDP + CoA + H(+). The protein operates within cofactor biosynthesis; coenzyme A biosynthesis. Functionally, catalyzes the GTP-dependent phosphorylation of the 3'-hydroxyl group of dephosphocoenzyme A to form coenzyme A (CoA). This Haloarcula marismortui (strain ATCC 43049 / DSM 3752 / JCM 8966 / VKM B-1809) (Halobacterium marismortui) protein is GTP-dependent dephospho-CoA kinase.